The primary structure comprises 1761 residues: Probable serine/threonine-protein kinase DDB_G0282963 (1761 aa).

12 disordered regions span residues 18 to 47 (PQQQ…QQQQ), 60 to 269 (QQQQ…SNKL), 322 to 458 (SISN…SDFN), 545 to 717 (QNSS…KSSQ), 749 to 783 (LKNS…TISQ), 798 to 830 (AFYN…STSA), 842 to 956 (TTQI…KSVF), 972 to 997 (NSHH…EVPT), 1081 to 1151 (ITSA…CNVN), 1179 to 1305 (KNNC…PSKQ), 1318 to 1343 (ALDS…GTPT), and 1355 to 1459 (QHSR…ECWK). 4 stretches are compositionally biased toward low complexity: residues 19-47 (QQQQ…QQQQ), 60-85 (QQQQ…SNEI), 92-105 (NITN…IISL), and 112-237 (ALNS…NNNN). Over residues 238–256 (KQMTPPTFKNNLQVKHQPQ) the composition is skewed to polar residues. 4 stretches are compositionally biased toward low complexity: residues 257-269 (SSSG…SNKL), 322-341 (SISN…TNTT), 348-451 (GSIG…NNGV), and 546-572 (NSSL…NNNI). The span at 573–582 (MAGSTSSVIY) shows a compositional bias: polar residues. Residues 591–627 (NENNNNNINNDNTVCNINNNNNSNNNKSNNSNNSNNS) are compositionally biased toward low complexity. The span at 633–643 (SSDEEPETDSD) shows a compositional bias: acidic residues. Low complexity-rich tracts occupy residues 674-697 (NNTN…NNNT), 759-778 (PILS…NNSN), 805-824 (NNNN…NNNN), 847-885 (TSDI…YNNY), 902-956 (TKMS…KSVF), 979-990 (SGNNSSNSNNNN), 1081-1149 (ITSA…CTCN), and 1180-1262 (NNCT…SNNN). Positions 1263-1273 (NHHHHHHHHHN) are enriched in basic residues. Low complexity-rich tracts occupy residues 1288–1303 (SSSS…SSPS), 1320–1338 (DSTN…TSSN), 1359–1386 (NNSS…NNNN), and 1393–1454 (SNST…MNSN). Residues 1476-1744 (LFLIKKIGAG…AITSLYDDYI (269 aa)) form the Protein kinase domain. ATP-binding positions include 1482–1490 (IGAGSFSKV) and Lys-1503. Asp-1597 (proton acceptor) is an active-site residue.

It belongs to the protein kinase superfamily. TKL Ser/Thr protein kinase family.

It catalyses the reaction L-seryl-[protein] + ATP = O-phospho-L-seryl-[protein] + ADP + H(+). The catalysed reaction is L-threonyl-[protein] + ATP = O-phospho-L-threonyl-[protein] + ADP + H(+). The protein is Probable serine/threonine-protein kinase DDB_G0282963 of Dictyostelium discoideum (Social amoeba).